The chain runs to 171 residues: Skp-like protein (171 aa).

A signal peptide spans 1–21; that stretch reads MKKLLFSTFLLVLGSTSAAHA.

Belongs to the Skp family.

The polypeptide is Skp-like protein (Chlamydia pneumoniae (Chlamydophila pneumoniae)).